Here is a 395-residue protein sequence, read N- to C-terminus: PCI domain-containing protein 2 homolog (395 aa).

Residues 208–389 (ITYKYFVGRR…NKLVVSKQNP (182 aa)) enclose the PCI domain.

Belongs to the CSN12 family. In terms of assembly, component of the nuclear pore complex (NPC)-associated TREX-2/AMEX complex (anchoring and mRNA export complex), composed of e(y)2, xmas and PCID2. Interaction between the TREX-2/AMEX complex and the ORC complex is required for ORC localization to mRNPs, and consequently mRNA export. Within the TREX-2/AMEX-ORC complex, interacts with Orc3 and Orc4. Interacts with sbr/NXF1. Interacts with Moe. Interacts with nudC; required to maintain stability in the cytoplasm. Mono- and poly-ubiquitinated.

Its subcellular location is the nucleus. The protein localises to the cytoplasm. It localises to the nucleus membrane. It is found in the cytoskeleton. Functionally, required for the export of nuclear mRNAs and involved in mRNA trafficking in the cytoplasm. Component of the nuclear pore complex (NPC)-associated TREX-2/AMEX complex (anchoring and mRNA export complex) which functions in docking export-competent ribonucleoprotein particles (mRNPs) to the nuclear entrance of the nuclear pore complex (nuclear basket), thereby enabling the export of mRNAs to the cytoplasm through the nuclear pores. Within the complex, specifically promotes the association of factors involved in regulating nuclear mRNA export, such as Moe, sbr/NXF1 and the ORC complex, to the mRNPs particles. In the cytoplasm, functions independently of its role in the TREX-2/AMEX complex, to promote cytoplasmic mRNA trafficking together with nudC. Associates with translationally active polysomes. The sequence is that of PCI domain-containing protein 2 homolog from Drosophila melanogaster (Fruit fly).